The sequence spans 340 residues: Flavonoid 7-O-methyltransferase 1 (340 aa).

Residue aspartate 207 coordinates S-adenosyl-L-methionine. The active-site Proton acceptor is the histidine 245.

It belongs to the class I-like SAM-binding methyltransferase superfamily. Cation-independent O-methyltransferase family. In terms of assembly, homodimer. Expressed in leaves.

It catalyses the reaction (2S)-naringenin + S-adenosyl-L-methionine = (2S)-sakuranetin + S-adenosyl-L-homocysteine + H(+). The enzyme catalyses scutellarein + S-adenosyl-L-methionine = scutellarein 7-methyl ether + S-adenosyl-L-homocysteine. It carries out the reaction apigenin + S-adenosyl-L-methionine = genkwanin + S-adenosyl-L-homocysteine + H(+). The catalysed reaction is luteolin + S-adenosyl-L-methionine = luteolin 7-methyl ether + S-adenosyl-L-homocysteine + H(+). It catalyses the reaction chrysoeriol + S-adenosyl-L-methionine = velutin + S-adenosyl-L-homocysteine. The enzyme catalyses diosmetin + S-adenosyl-L-methionine = luteolin 4',7-dimethyl ether + S-adenosyl-L-homocysteine. It carries out the reaction acacetin + S-adenosyl-L-methionine = apigenin 4',7-dimethyl ether + S-adenosyl-L-homocysteine. The catalysed reaction is scutellarein 4'-methyl ether + S-adenosyl-L-methionine = ladanein + S-adenosyl-L-homocysteine. It functions in the pathway flavonoid metabolism. Flavonoid 7-O-methyltransferase involved in the biosynthesis of polymethoxylated flavonoids natural products such as nevadensin and salvigenin, aroma compounds which contribute to the flavor of sweet basil, and exhibit pharmacological activities such as anti-allergic, anti-oxidant, antibacterial, anti-proliferative, and anti-inflammatory effects. Catalyzes S-adenosylmethionine-dependent regioselective 7-O-methylation of flavonoids; active on various hydroxylated flavonoid substrates, including apigenin (API) and luteolin (LUT), and, with a lower efficiency, scutellarein (SCU), naringenin (NAR), chrysoeriol (CHRYS), diosmetin (DIOS), acacetin (ACA) and scutellarein-7-methyl ether (SCU7Me). In Ocimum basilicum (Sweet basil), this protein is Flavonoid 7-O-methyltransferase 1.